A 201-amino-acid polypeptide reads, in one-letter code: Recombination protein RecR (201 aa).

The C4-type zinc finger occupies 60–75; sequence CSCCGNVDTSDPCTIC. Residues 83–178 enclose the Toprim domain; sequence ATLIVVEDVS…RVTRLAHGVP (96 aa).

This sequence belongs to the RecR family.

Functionally, may play a role in DNA repair. It seems to be involved in an RecBC-independent recombinational process of DNA repair. It may act with RecF and RecO. This Brucella abortus biovar 1 (strain 9-941) protein is Recombination protein RecR.